The chain runs to 612 residues: Dihydroxy-acid dehydratase (612 aa).

D81 contacts Mg(2+). C122 lines the [2Fe-2S] cluster pocket. Mg(2+)-binding residues include D123 and K124. Residue K124 is modified to N6-carboxylysine. C195 is a [2Fe-2S] cluster binding site. A Mg(2+)-binding site is contributed by E491. Catalysis depends on S517, which acts as the Proton acceptor.

This sequence belongs to the IlvD/Edd family. In terms of assembly, homodimer. Requires [2Fe-2S] cluster as cofactor. Mg(2+) is required as a cofactor.

The enzyme catalyses (2R)-2,3-dihydroxy-3-methylbutanoate = 3-methyl-2-oxobutanoate + H2O. The catalysed reaction is (2R,3R)-2,3-dihydroxy-3-methylpentanoate = (S)-3-methyl-2-oxopentanoate + H2O. The protein operates within amino-acid biosynthesis; L-isoleucine biosynthesis; L-isoleucine from 2-oxobutanoate: step 3/4. It functions in the pathway amino-acid biosynthesis; L-valine biosynthesis; L-valine from pyruvate: step 3/4. Its function is as follows. Functions in the biosynthesis of branched-chain amino acids. Catalyzes the dehydration of (2R,3R)-2,3-dihydroxy-3-methylpentanoate (2,3-dihydroxy-3-methylvalerate) into 2-oxo-3-methylpentanoate (2-oxo-3-methylvalerate) and of (2R)-2,3-dihydroxy-3-methylbutanoate (2,3-dihydroxyisovalerate) into 2-oxo-3-methylbutanoate (2-oxoisovalerate), the penultimate precursor to L-isoleucine and L-valine, respectively. This Haemophilus influenzae (strain 86-028NP) protein is Dihydroxy-acid dehydratase.